Here is a 529-residue protein sequence, read N- to C-terminus: DNA-binding protein (529 aa).

Residues methionine 1–arginine 17 show a composition bias toward basic and acidic residues. 2 disordered regions span residues methionine 1–serine 107 and proline 125–glutamate 166. Residues lysine 129–arginine 139 show a composition bias toward basic residues. A compositionally biased stretch (acidic residues) spans glutamate 155–serine 165. Tyrosine 195 carries the post-translational modification Phosphotyrosine; by host. Zn(2+)-binding residues include cysteine 284 and histidine 286. The tract at residues isoleucine 297–isoleucine 331 is flexible loop. Residues cysteine 339, cysteine 355, cysteine 396, cysteine 398, cysteine 450, and cysteine 467 each contribute to the Zn(2+) site. Residues valine 513–phenylalanine 529 form a C-terminal arm, DBP binding region.

The protein belongs to the adenoviridae E2A DNA-binding protein family. As to quaternary structure, homomultimerizes on viral ssDNA bound to pTP. Forms a initiation complex with viral polymerase, pTP and hosts NFIA and POU2F1/OCT1. Interacts with host SRCAP.

The protein localises to the host nucleus. Functionally, plays a role in the elongation phase of viral strand displacement replication by unwinding the template in an ATP-independent fashion, employing its capacity to form multimers. Also enhances the rate of initiation. Released from template upon second strand synthesis. Assembles in complex with viral pTP, viral pol, host NFIA and host POU2F1/OCT1 on viral origin of replication. Covers the whole ssDNA genome during synthesis. The complementary strand synthesis induces its relese from DNA template. May inhibit cellular transcription mediated by the interaction between host SRCAP and CBP. The sequence is that of DNA-binding protein from Human adenovirus C serotype 5 (HAdV-5).